The sequence spans 430 residues: Trigger factor (430 aa).

The PPIase FKBP-type domain maps to 163–248; that stretch reads GDVVDVDYKG…LNSIKTSILP (86 aa).

This sequence belongs to the FKBP-type PPIase family. Tig subfamily.

Its subcellular location is the cytoplasm. The enzyme catalyses [protein]-peptidylproline (omega=180) = [protein]-peptidylproline (omega=0). Functionally, involved in protein export. Acts as a chaperone by maintaining the newly synthesized protein in an open conformation. Functions as a peptidyl-prolyl cis-trans isomerase. This chain is Trigger factor, found in Lawsonia intracellularis (strain PHE/MN1-00).